A 337-amino-acid chain; its full sequence is Heme A synthase (337 aa).

The next 5 membrane-spanning stretches (helical) occupy residues 6-26, 87-107, 119-139, 154-174, and 192-212; these read ITKW…IGGI, FIHR…LIYF, LPYI…WYMV, LAFH…QLIK, and LIFS…GALV. Histidine 256 provides a ligand contact to heme. A run of 3 helical transmembrane segments spans residues 258-278, 285-305, and 308-328; these read LGGY…LKIE, IAYF…ITLL, and VPII…SIII. Residue histidine 316 participates in heme binding.

Belongs to the COX15/CtaA family. Type 2 subfamily. In terms of assembly, interacts with CtaB. Heme b serves as cofactor.

The protein localises to the cell membrane. It carries out the reaction Fe(II)-heme o + 2 A + H2O = Fe(II)-heme a + 2 AH2. It participates in porphyrin-containing compound metabolism; heme A biosynthesis; heme A from heme O: step 1/1. In terms of biological role, catalyzes the conversion of heme O to heme A by two successive hydroxylations of the methyl group at C8. The first hydroxylation forms heme I, the second hydroxylation results in an unstable dihydroxymethyl group, which spontaneously dehydrates, resulting in the formyl group of heme A. This Rickettsia massiliae (strain Mtu5) protein is Heme A synthase.